A 120-amino-acid chain; its full sequence is uncharacterized protein (120 aa).

The protein to B.subtilis XkdH.

This is an uncharacterized protein from Bacillus subtilis (strain 168).